A 273-amino-acid polypeptide reads, in one-letter code: Putative phosphoenolpyruvate synthase regulatory protein (273 aa).

153–160 is an ADP binding site; the sequence is AVSRAGKT.

This sequence belongs to the pyruvate, phosphate/water dikinase regulatory protein family. PSRP subfamily.

It carries out the reaction [pyruvate, water dikinase] + ADP = [pyruvate, water dikinase]-phosphate + AMP + H(+). The catalysed reaction is [pyruvate, water dikinase]-phosphate + phosphate + H(+) = [pyruvate, water dikinase] + diphosphate. Its function is as follows. Bifunctional serine/threonine kinase and phosphorylase involved in the regulation of the phosphoenolpyruvate synthase (PEPS) by catalyzing its phosphorylation/dephosphorylation. The polypeptide is Putative phosphoenolpyruvate synthase regulatory protein (Xanthomonas campestris pv. campestris (strain 8004)).